Here is a 417-residue protein sequence, read N- to C-terminus: Pelargonidin 3-O-(6-caffeoylglucoside) 5-O-(6-O-malonylglucoside) 4'''-malonyltransferase (417 aa).

Active-site proton acceptor residues include histidine 147 and aspartate 360.

It belongs to the plant acyltransferase family. Monomer. In terms of tissue distribution, expressed at higher level in recently opened, fully pigmented flowers.

It carries out the reaction 4'''-demalonylsalvianin + malonyl-CoA = salvianin + CoA. It participates in pigment biosynthesis; anthocyanin biosynthesis. Inhibited by the following metal ions: Cd(2+), Cu(2+), Fe(2+), Hg(2+) and Zn(2+). Activity is strongly inhibited by CoA-SH and partially inhibited by acetyl-CoA, caffeic acid and bisdemalonylsalvianin. In terms of biological role, catalyzes the transfer of the malonyl group from malonyl-CoA to the 4'''-hydroxyl group of the 5-glucosyl moiety of anthocyanins. Anthocyanins are ubiquitous colored pigments that are responsible for petal color. In Salvia splendens (Scarlet sage), this protein is Pelargonidin 3-O-(6-caffeoylglucoside) 5-O-(6-O-malonylglucoside) 4'''-malonyltransferase.